The sequence spans 1065 residues: DNA polymerase III subunit alpha (1065 aa).

This sequence belongs to the DNA polymerase type-C family. DnaE subfamily. DNA polymerase III contains a core (composed of alpha, epsilon and theta chains) that associates with a tau subunit. This core dimerizes to form the PolIII' complex. PolIII' associates with the gamma complex (composed of gamma, delta, delta', psi and chi chains) and with the beta chain to form the complete DNA polymerase III complex.

The protein resides in the cytoplasm. It carries out the reaction DNA(n) + a 2'-deoxyribonucleoside 5'-triphosphate = DNA(n+1) + diphosphate. DNA polymerase III is a complex, multichain enzyme responsible for most of the replicative synthesis in bacteria. This DNA polymerase also exhibits 3' to 5' exonuclease activity. The alpha chain is the DNA polymerase. The polypeptide is DNA polymerase III subunit alpha (dnaE) (Staphylococcus aureus (strain MSSA476)).